The chain runs to 96 residues: Protein Vpr (96 aa).

The interval M1 to L42 is homooligomerization. 3 positions are modified to phosphoserine; by host: S79, S94, and S96.

The protein belongs to the HIV-1 VPR protein family. Homooligomer, may form homodimer. Interacts with p6-gag region of the Pr55 Gag precursor protein through a (Leu-X-X)4 motif near the C-terminus of the P6gag protein. Interacts with host UNG. May interact with host RAD23A/HHR23A. Interacts with host VPRBP/DCAF1, leading to hijack the CUL4A-RBX1-DDB1-DCAF1/VPRBP complex, mediating ubiquitination of host proteins such as TERT and ZGPAT and arrest of the cell cycle in G2 phase. Phosphorylated on several residues by host. These phosphorylations regulate VPR activity for the nuclear import of the HIV-1 pre-integration complex.

It localises to the virion. The protein resides in the host nucleus. The protein localises to the host extracellular space. In terms of biological role, during virus replication, may deplete host UNG protein, and incude G2-M cell cycle arrest. Acts by targeting specific host proteins for degradation by the 26S proteasome, through association with the cellular CUL4A-DDB1 E3 ligase complex by direct interaction with host VPRPB/DCAF-1. Cell cycle arrest reportedly occurs within hours of infection and is not blocked by antiviral agents, suggesting that it is initiated by the VPR carried into the virion. Additionally, VPR induces apoptosis in a cell cycle dependent manner suggesting that these two effects are mechanistically linked. Detected in the serum and cerebrospinal fluid of AIDS patient, VPR may also induce cell death to bystander cells. Its function is as follows. During virus entry, plays a role in the transport of the viral pre-integration (PIC) complex to the host nucleus. This function is crucial for viral infection of non-dividing macrophages. May act directly at the nuclear pore complex, by binding nucleoporins phenylalanine-glycine (FG)-repeat regions. In Homo sapiens (Human), this protein is Protein Vpr.